The following is a 652-amino-acid chain: Acetyl-coenzyme A synthetase (652 aa).

Residues 190–193 and threonine 310 each bind CoA; that span reads RGGR. ATP-binding positions include 386–388, 410–415, aspartate 499, and arginine 514; these read GEP and DTWWQT. Serine 522 lines the CoA pocket. Arginine 525 serves as a coordination point for ATP. 3 residues coordinate Mg(2+): valine 536, histidine 538, and valine 541. Arginine 583 is a binding site for CoA. Lysine 608 carries the post-translational modification N6-acetyllysine.

Belongs to the ATP-dependent AMP-binding enzyme family. The cofactor is Mg(2+). Acetylated. Deacetylation by the SIR2-homolog deacetylase activates the enzyme.

It carries out the reaction acetate + ATP + CoA = acetyl-CoA + AMP + diphosphate. In terms of biological role, catalyzes the conversion of acetate into acetyl-CoA (AcCoA), an essential intermediate at the junction of anabolic and catabolic pathways. AcsA undergoes a two-step reaction. In the first half reaction, AcsA combines acetate with ATP to form acetyl-adenylate (AcAMP) intermediate. In the second half reaction, it can then transfer the acetyl group from AcAMP to the sulfhydryl group of CoA, forming the product AcCoA. This Methylorubrum extorquens (strain CM4 / NCIMB 13688) (Methylobacterium extorquens) protein is Acetyl-coenzyme A synthetase.